A 2169-amino-acid chain; its full sequence is Voltage-dependent L-type calcium channel subunit alpha-1C (2169 aa).

Residues 1 to 154 lie on the Cytoplasmic side of the membrane; the sequence is MIRAFAQPST…RACISIVEWK (154 aa). The segment at 77–98 is calmodulin-binding; that stretch reads GAALSWLAAIDAARQAKLMGSA. Residues 104 to 128 form a disordered region; it reads STVSSTQRKRQQYGKPKKQGGTTAT. Over residues 110-121 the composition is skewed to basic residues; sequence QRKRQQYGKPKK. The stretch at 141–438 is one I repeat; the sequence is NPIRRACISI…LVLGVLSGEF (298 aa). Residues 155–173 form a helical membrane-spanning segment; the sequence is PFEIIILLTIFANCVALAI. The Extracellular segment spans residues 174-188; the sequence is YIPFPEDDSNATNSN. An N-linked (GlcNAc...) asparagine glycan is attached at Asn-183. A helical transmembrane segment spans residues 189–209; that stretch reads LERVEYLFLIIFTVEAFLKVI. Residues 210–218 are Cytoplasmic-facing; it reads AYGLLFHPN. The chain crosses the membrane as a helical span at residues 219 to 239; that stretch reads AYLRNGWNLLDFIIVVVGLFS. Residues 240-262 are Extracellular-facing; that stretch reads AILEQATKADGANALGGKGAGFD. Residues 263–281 traverse the membrane as a helical segment; the sequence is VKALRAFRVLRPLRLVSGV. Residues 282–298 are Cytoplasmic-facing; that stretch reads PSLQVVLNSIIKAMVPL. The chain crosses the membrane as a helical span at residues 299 to 320; that stretch reads LHIALLVLFVIIIYAIIGLELF. Residues 321 to 380 are Extracellular-facing; sequence MGKMHKTCYNQEGIIDVPAEEDPSPCALETGHGRQCQNGTVCKPGWDGPKHGITNFDNFA. 2 disulfides stabilise this stretch: Cys-328–Cys-356 and Cys-346–Cys-362. The N-linked (GlcNAc...) asparagine glycan is linked to Asn-358. Residues 381-402 constitute an intramembrane region (pore-forming); the sequence is FAMLTVFQCITMEGWTDVLYWM. The Selectivity filter of repeat I motif lies at 391–394; it reads TMEG. Position 393 (Glu-393) interacts with Ca(2+). The Extracellular portion of the chain corresponds to 403–410; that stretch reads QDAMGYEL. The helical transmembrane segment at 411–431 threads the bilayer; it reads PWVYFVSLVIFGSFFVLNLVL. The Cytoplasmic portion of the chain corresponds to 432-554; the sequence is GVLSGEFSKE…RKCRAAVKSN (123 aa). Residues 458-475 are AID/alpha-interaction domain; mediates interaction with the beta subunit; that stretch reads QQLEEDLKGYLDWITQAE. Positions 479–511 are disordered; sequence PENEDEGMDEDKPRNMSMPTSETESVNTENVAG. Polar residues predominate over residues 495–508; the sequence is SMPTSETESVNTEN. Ser-499 carries the phosphoserine modification. At Thr-506 the chain carries Phosphothreonine. An II repeat occupies 540 to 786; that stretch reads NRFCRRKCRA…LFLAIAVDNL (247 aa). Residues 555 to 573 form a helical membrane-spanning segment; it reads VFYWLVIFLVFLNTLTIAS. Topologically, residues 574–584 are extracellular; the sequence is EHYNQPHWLTE. A helical transmembrane segment spans residues 585-605; the sequence is VQDTANKALLALFTAEMLLKM. The Cytoplasmic portion of the chain corresponds to 606-616; that stretch reads YSLGLQAYFVS. Residues 617–636 traverse the membrane as a helical segment; it reads LFNRFDCFIVCGGILETILV. Topologically, residues 637 to 645 are extracellular; it reads ETKIMSPLG. The chain crosses the membrane as a helical span at residues 646-664; sequence ISCWRCVRLLRIFKITRYW. The Cytoplasmic portion of the chain corresponds to 665 to 683; sequence NSLSNLVASLLNSLRSIAS. The helical transmembrane segment at 684–703 threads the bilayer; the sequence is LLLLLFLFIIIFSLLGMQLF. At 704–723 the chain is on the extracellular side; it reads GGKFNFDEMQTRRSTFDNFP. An intramembrane region (pore-forming) is located at residues 724 to 745; the sequence is QSLLTVFQILTGEDWNSVMYDG. The Selectivity filter of repeat II signature appears at 734-737; the sequence is TGED. Position 736 (Glu-736) interacts with Ca(2+). Residues 746–755 are Extracellular-facing; the sequence is IMAYGGPSFP. The chain crosses the membrane as a helical span at residues 756–775; it reads GMLVCIYFIILFISPNYILL. At 776-930 the chain is on the cytoplasmic side; sequence NLFLAIAVDN…LQCHRIVNDT (155 aa). The segment at 794-891 is disordered; the sequence is SAQKEEEEEK…EMPVGPRPRP (98 aa). Basic and acidic residues predominate over residues 813-836; the sequence is SPEKKQEVMEKPAVEESKEEKIEL. 2 positions are modified to phosphoserine: Ser-838 and Ser-845. Residues 859-906 form an interaction with STAC2 region; the sequence is SENEDKSPHSNPDTAGEEDEEEPEMPVGPRPRPLSELHLKEKAVPMPE. Residues 873–882 are compositionally biased toward acidic residues; it reads AGEEDEEEPE. The stretch at 917-1198 is one III repeat; sequence NRFRLQCHRI…IFVGFVIVTF (282 aa). Residues 931-949 form a helical membrane-spanning segment; it reads IFTNLILFFILLSSISLAA. At 950 to 961 the chain is on the extracellular side; sequence EDPVQHTSFRNH. The helical transmembrane segment at 962-981 threads the bilayer; the sequence is ILFYFDIVFTTIFTIEIALK. Over 982 to 997 the chain is Cytoplasmic; sequence MTAYGAFLHKGSFCRN. A helical transmembrane segment spans residues 998–1016; sequence YFNILDLLVVSVSLISFGI. Topologically, residues 1017–1023 are extracellular; that stretch reads QSSAINV. Residues 1024-1041 form a helical membrane-spanning segment; that stretch reads VKILRVLRVLRPLRINRA. At 1042-1060 the chain is on the cytoplasmic side; that stretch reads KGLKHVVQCVFVAIRTIGN. A helical membrane pass occupies residues 1061–1080; sequence IVIVTTLLQFMFACIGVQLF. Over 1081 to 1130 the chain is Extracellular; that stretch reads KGKLYTCSDSSKQTEAESKGNYITYKTGEVDHPIIQPRSWENSKFDFDNV. The tract at residues 1118–1207 is dihydropyridine binding; it reads RSWENSKFDF…FQEQGEQEYK (90 aa). The pore-forming intramembrane region spans 1131–1151; that stretch reads LAAMMALFTVSTFEGWPELLY. The Selectivity filter of repeat III signature appears at 1142 to 1145; that stretch reads TFEG. Glu-1144 contributes to the Ca(2+) binding site. Topologically, residues 1152–1168 are extracellular; the sequence is RSIDSHTEDKGPIYNYR. A helical transmembrane segment spans residues 1169–1190; the sequence is VEISIFFIIYIIIIAFFMMNIF. Topologically, residues 1191 to 1248 are cytoplasmic; it reads VGFVIVTFQEQGEQEYKNCELDKNQRQCVEYALKARPLPRYIPKNQHQYKVWYVVNST. An IV repeat occupies 1235–1508; it reads NQHQYKVWYV…LFVAVIMDNF (274 aa). The chain crosses the membrane as a helical span at residues 1249-1270; it reads YFEYLMFVLILLNTICLAMQHY. Residues 1271 to 1278 are Extracellular-facing; sequence GQSCLFKI. A helical transmembrane segment spans residues 1279-1300; it reads AMNILNMLFTGLFTVEMILKLI. The Cytoplasmic segment spans residues 1301–1310; it reads AFKPKHYFCD. Residues 1311–1330 form a helical membrane-spanning segment; the sequence is AWNTFDALIVVGSIVDIAIT. Over 1331–1353 the chain is Extracellular; it reads EVHPAEHTQCSPSMSAEENSRIS. A helical transmembrane segment spans residues 1354-1372; sequence ITFFRLFRVMRLVKLLSRG. Topologically, residues 1373 to 1390 are cytoplasmic; that stretch reads EGIRTLLWTFIKSFQALP. A helical membrane pass occupies residues 1391–1411; sequence YVALLIVMLFFIYAVIGMQVF. The Extracellular portion of the chain corresponds to 1412–1433; sequence GKIALNDTTEINRNNNFQTFPQ. Asn-1417 carries an N-linked (GlcNAc...) asparagine glycan. Positions 1434 to 1452 form an intramembrane region, pore-forming; sequence AVLLLFRCATGEAWQDIML. The Selectivity filter of repeat IV motif lies at 1443-1446; the sequence is TGEA. The Extracellular portion of the chain corresponds to 1453–1480; sequence ACMPGKKCAPESEPSNSTEGETPCGSSF. The tract at residues 1459 to 1527 is dihydropyridine binding; the sequence is KCAPESEPSN…LGPHHLDEFK (69 aa). A disulfide bond links Cys-1460 and Cys-1476. N-linked (GlcNAc...) asparagine glycosylation is present at Asn-1468. A phenylalkylamine binding region spans residues 1473-1515; it reads ETPCGSSFAVFYFISFYMLCAFLIINLFVAVIMDNFDYLTRDW. The chain crosses the membrane as a helical span at residues 1481-1505; sequence AVFYFISFYMLCAFLIINLFVAVIM. Residues 1506 to 2169 lie on the Cytoplasmic side of the membrane; sequence DNFDYLTRDW…PDSRSYVSNL (664 aa). Residues 1640-1667 form an important for interaction with STAC1, STAC2 and STAC3 region; it reads DEVTVGKFYATFLIQEYFRKFKKRKEQG. The calmodulin-binding stretch occupies residues 1640–1673; sequence DEVTVGKFYATFLIQEYFRKFKKRKEQGLVGKPS. Residues 1646 to 1666 form a calmodulin-binding IQ region region; the sequence is KFYATFLIQEYFRKFKKRKEQ. Positions 1680 to 1699 are important for localization in at the junctional membrane; the sequence is LQAGLRTLHDIGPEIRRAIS. Residues Ser-1699 and Ser-1720 each carry the phosphoserine modification. 2 stretches are compositionally biased toward polar residues: residues 1761–1770 and 1780–1792; these read KTGNNQADTE and STFT…STGS. Residues 1761-1793 are disordered; that stretch reads KTGNNQADTESPSHEKLVDSTFTPSSYSSTGSN. Ser-1927 carries the phosphoserine; by PKA modification. The disordered stretch occupies residues 1970-1998; it reads RSHSPSTFPRPRPTPPVTPGSRGRPLQPI. The segment covering 1977 to 1987 has biased composition (pro residues); the sequence is FPRPRPTPPVT.

The protein belongs to the calcium channel alpha-1 subunit (TC 1.A.1.11) family. CACNA1C subfamily. Component of a calcium channel complex consisting of a pore-forming alpha subunit (CACNA1C) and ancillary beta, gamma and delta subunits. The channel complex contains alpha, beta, gamma and delta subunits in a 1:1:1:1 ratio, i.e. it contains only one of each type of subunit. CACNA1C channel activity is modulated by ancillary subunits, such as CACNB1, CACNB2, CACNB3, CACNA2D1 and CACNA2D4. Interacts with the gamma subunits CACNG4, CACNG6, CACNG7 and CACNG8. Interacts with CACNB1. Interacts with CACNB2. Identified in a complex with CACNA2D4 and CACNB3. Interacts with CACNB3. Interacts with CACNA2D1. Interacts with CACNA2D4. Interacts with CALM1. Interacts (via the N-terminus and the C-terminal C and IQ motifs) with CABP1; this inhibits Ca(2+)-dependent channel inactivation. The binding via the C motif is calcium independent whereas the binding via IQ requires the presence of calcium and is mutually exclusive with calmodulin binding. The binding to the cytoplasmic N-terminal domain is calcium independent but is essential for the channel modulation. Interacts (via C-terminal CDB motif) with CABP5; in a calcium-dependent manner. Interacts with CIB1; the interaction increases upon cardiomyocytes hypertrophy. Interacts with STAC2 and STAC3; this inhibits channel inactivation. Phosphorylation by PKA at Ser-1927 activates the channel. Elevated levels of blood glucose lead to increased phosphorylation by PKA. Is also phosphorylated in vitro by CaM-kinase II, PKC and CGPK. As to expression, detected in hippocampus and brain cortex, on neuronal cell bodies and dendrites, and in post-synaptic density in brain (at protein level). Isoforms 4 and 5 are expressed throughout the central nervous system, with highest levels in the olfactory bulb and cerebellum. Also expressed in heart, pituitary, adrenal gland, liver, kidney, and in a much lesser extent in testes and spleen.

The protein localises to the cell membrane. Its subcellular location is the sarcolemma. It localises to the perikaryon. The protein resides in the postsynaptic density membrane. It is found in the cell projection. The protein localises to the dendrite. Its subcellular location is the T-tubule. The catalysed reaction is Ca(2+)(in) = Ca(2+)(out). Inhibited by dihydropyridines (DHP), such as isradipine. Inhibited by nifedipine. Channel activity is regulated by Ca(2+) and calmodulin. Binding of STAC1, STAC2 or STAC3 to a region that overlaps with the calmodulin binding site inhibits channel inactivation by Ca(2+) and calmodulin. Binding of calmodulin or CABP1 at the same regulatory sites results in opposite effects on the channel function. Shear stress and pressure increases calcium channel activity. Its function is as follows. Pore-forming, alpha-1C subunit of the voltage-gated calcium channel that gives rise to L-type calcium currents. Mediates influx of calcium ions into the cytoplasm, and thereby triggers calcium release from the sarcoplasm. Plays an important role in excitation-contraction coupling in the heart. Required for normal heart development and normal regulation of heart rhythm. Required for normal contraction of smooth muscle cells in blood vessels and in the intestine. Essential for normal blood pressure regulation via its role in the contraction of arterial smooth muscle cells. Long-lasting (L-type) calcium channels belong to the 'high-voltage activated' (HVA) group. In Rattus norvegicus (Rat), this protein is Voltage-dependent L-type calcium channel subunit alpha-1C (Cacna1c).